The chain runs to 798 residues: MSFDPNLLHNNGHNGYPNGTSAALRETGVIEKLLTSYGFIQCSERQARLFFHCSQYNGNLQDLKVGDDVEFEVSSDRRTGKPIAVKLVKIKQEILPEERMNGQVVCAVPHNLESKSPAAPGQSPTGSVCYERNGEVFYLTYTPEDVEGNVQLETGDKINFVIDNNKHTGAVSARNIMLLKKKQARCQGVVCAMKEAFGFIERGDVVKEIFFHYSEFKGDLETLQPGDDVEFTIKDRNGKEVATDVRLLPQGTVIFEDISIEHFEGTVTKVIPKVPSKNQNDPLPGRIKVDFVIPKELPFGDKDTKSKVTLLEGDHVRFNISTDRRDKLERATNIEVLSNTFQFTNEAREMGVIAAMRDGFGFIKCVDRDVRMFFHFSEILDGNQLHIADEVEFTVVPDMLSAQRNHAIRIKKLPKGTVSFHSHSDHRFLGTVEKEATFSNPKTTSPNKGKEKEAEDGIIAYDDCGVKLTIAFQAKDVEGSTSPQIGDKVEFSISDKQRPGQQVATCVRLLGRNSNSKRLLGYVATLKDNFGFIETANHDKEIFFHYSEFSGDVDSLELGDMVEYSLSKGKGNKVSAEKVNKTHSVNGITEEADPTIYSGKVIRPLRSVDPTQTEYQGMIEIVEEGDMKGEVYPFGIVGMANKGDCLQKGESVKFQLCVLGQNAQTMAYNITPLRRATVECVKDQFGFINYEVGDSKKLFFHVKEVQDGIELQAGDEVEFSVILNQRTGKCSACNVWRVCEGPKAVAAPRPDRLVNRLKNITLDDASAPRLMVLRQPRGPDNSMGFGAERKIRQAGVID.

The residue at position 1 (M1) is an N-acetylmethionine. One can recognise a CSD 1 domain in the interval 26–87 (ETGVIEKLLT…RTGKPIAVKL (62 aa)). An N6-acetyllysine modification is found at K81. K91 is covalently cross-linked (Glycyl lysine isopeptide (Lys-Gly) (interchain with G-Cter in SUMO2)). Position 123 is a phosphoserine (S123). The CSD 2; truncated domain maps to 136–179 (VFYLTYTPEDVEGNVQLETGDKINFVIDNNKHTGAVSARNIMLL). In terms of domain architecture, CSD 3 spans 186-245 (CQGVVCAMKEAFGFIERGDVVKEIFFHYSEFKGDLETLQPGDDVEFTIKDRNGKEVATDV). Phosphoserine is present on S276. A CSD 4; truncated domain is found at 297–337 (LPFGDKDTKSKVTLLEGDHVRFNISTDRRDKLERATNIEVL). CSD domains lie at 349-410 (EMGV…AIRI) and 447-507 (NKGK…ATCV). Residue S514 is modified to Phosphoserine. The CSD 7 domain occupies 519-579 (LLGYVATLKD…KGNKVSAEKV (61 aa)). S584 carries the phosphoserine modification. 2 consecutive CSD domains span residues 610–670 (PTQT…AYNI) and 674–735 (RRAT…ACNV). Residues 748–789 (PRPDRLVNRLKNITLDDASAPRLMVLRQPRGPDNSMGFGAER) enclose the SUZ-C domain. T761 carries the post-translational modification Phosphothreonine.

Belongs to the UNR family. Component of a multi subunit autoregulatory ribonucleoprotein complex (ARC), at least composed of IGF2BP1, PABPC1 and CSDE1. Interacts with STRAP. Part of a complex associated with the FOS mCRD domain and consisting of PABPC1, PAIP1, HNRPD and SYNCRIP. The interaction with PABPC1 is direct and RNA-independent. Interacts with EIF4ENIF1/4E-T.

The protein resides in the cytoplasm. It is found in the stress granule. The protein localises to the P-body. Functionally, RNA-binding protein involved in translationally coupled mRNA turnover. Implicated with other RNA-binding proteins in the cytoplasmic deadenylation/translational and decay interplay of the FOS mRNA mediated by the major coding-region determinant of instability (mCRD) domain. Required for efficient formation of stress granules. In terms of biological role, (Microbial infection) Required for internal initiation of translation of human rhinovirus RNA. The sequence is that of Cold shock domain-containing protein E1 from Homo sapiens (Human).